Here is a 437-residue protein sequence, read N- to C-terminus: Nuclear hormone receptor family member nhr-28 (437 aa).

Positions 5–80 (KSPCSVCGEA…VGMRKSAVQR (76 aa)) form a DNA-binding region, nuclear receptor. 2 NR C4-type zinc fingers span residues 8-28 (CSVCGEAGDGAHFGAEACRAC) and 44-68 (CRAMGTCVIQKNVRCMCRACRFTKC). One can recognise an NR LBD domain in the interval 115–376 (YEETGMPTLS…ETFYELVSGR (262 aa)).

It belongs to the nuclear hormone receptor family. In terms of tissue distribution, expressed in the pharynx, intestine and hypodermis.

It localises to the nucleus. Functionally, orphan nuclear receptor. In Caenorhabditis elegans, this protein is Nuclear hormone receptor family member nhr-28 (nhr-28).